Here is a 105-residue protein sequence, read N- to C-terminus: UPF0235 protein RF_1332 (105 aa).

This sequence belongs to the UPF0235 family.

In Rickettsia felis (strain ATCC VR-1525 / URRWXCal2) (Rickettsia azadi), this protein is UPF0235 protein RF_1332.